A 479-amino-acid polypeptide reads, in one-letter code: Probable polyamine transporter At3g19553 (479 aa).

12 helical membrane-spanning segments follow: residues 22 to 42 (LTLL…PFGV), 53 to 73 (LLAL…EALV), 86 to 106 (GYVV…EGFW), 130 to 150 (FPVL…TFSL), 160 to 180 (IVGF…VVMA), 236 to 256 (ALFG…MAGT), 275 to 295 (VGML…AAMS), 304 to 324 (MSSD…PAFF), 332 to 352 (TPTI…WMSF), 355 to 375 (IIEF…AAFV), 395 to 415 (FGVS…MVLA), and 420 to 440 (FLIS…LTLV). The interval 454–479 (RPVSGVSSESQLDEEHGDESAASLLP) is disordered.

The protein belongs to the amino acid-polyamine-organocation (APC) superfamily. Polyamine:cation symporter (PHS) (TC 2.A.3.12) family.

The protein resides in the cell membrane. In terms of biological role, probable cell membrane polyamine/proton symporter involved in the polyamine uptake in cells. The polypeptide is Probable polyamine transporter At3g19553 (Arabidopsis thaliana (Mouse-ear cress)).